The sequence spans 1031 residues: Putative protein TIC 214 N-terminal part (1031 aa).

6 consecutive transmembrane segments (helical) span residues 11–31 (ILWAQILSWISISGPLILFGL), 68–88 (TLGQLIILISIFYSPLYIMLL), 92–112 (AITLITLPYVLFYWYEIKDLS), 127–147 (GIIQIFLNSFLFQIFNPILLP), 166–186 (SFFVISLFCGWLGGNILLINL), and 212–232 (TFSIIIFVACLSYLGKFPVPF).

It belongs to the TIC214 family. In terms of assembly, part of the Tic complex.

It is found in the plastid. The protein localises to the chloroplast inner membrane. Involved in protein precursor import into chloroplasts. May be part of an intermediate translocation complex acting as a protein-conducting channel at the inner envelope. This is Putative protein TIC 214 N-terminal part from Anthoceros angustus (Hornwort).